A 139-amino-acid chain; its full sequence is Large ribosomal subunit protein uL16 (139 aa).

The protein belongs to the universal ribosomal protein uL16 family. As to quaternary structure, part of the 50S ribosomal subunit.

Its function is as follows. Binds 23S rRNA and is also seen to make contacts with the A and possibly P site tRNAs. The protein is Large ribosomal subunit protein uL16 of Parvibaculum lavamentivorans (strain DS-1 / DSM 13023 / NCIMB 13966).